Here is a 925-residue protein sequence, read N- to C-terminus: Protein PDC2 (925 aa).

One can recognise an HTH CENPB-type domain in the interval 63 to 138 (DANRLRKPNN…LSKMDVNISV (76 aa)). Disordered stretches follow at residues 510–596 (DNNQ…RNSS), 674–693 (NEKA…SSTA), and 904–925 (PTGG…TGFF). The segment covering 513–537 (QNHLSMSQASHNPDYNSNHSNNAIE) has biased composition (polar residues). The segment covering 538-563 (NTNNRGSNNNNNNNGSSNNINDNDSS) has biased composition (low complexity). Polar residues predominate over residues 565–596 (KYLQQNTVDNSTKTGNPGQPNISSMESQRNSS). Positions 674–686 (NEKAASDQNKSTD) are enriched in basic and acidic residues. A compositionally biased stretch (polar residues) spans 904-916 (PTGGSNLPDSNNL).

Essential for the synthesis of pyruvate decarboxylase. May be important for a high basal level of PDC gene expression or play a positive role in the autoregulation control of PDC1 and PDC5. This chain is Protein PDC2 (PDC2), found in Saccharomyces cerevisiae (strain ATCC 204508 / S288c) (Baker's yeast).